Here is a 207-residue protein sequence, read N- to C-terminus: N-(5'-phosphoribosyl)anthranilate isomerase (207 aa).

The protein belongs to the TrpF family.

The enzyme catalyses N-(5-phospho-beta-D-ribosyl)anthranilate = 1-(2-carboxyphenylamino)-1-deoxy-D-ribulose 5-phosphate. The protein operates within amino-acid biosynthesis; L-tryptophan biosynthesis; L-tryptophan from chorismate: step 3/5. The chain is N-(5'-phosphoribosyl)anthranilate isomerase from Legionella pneumophila (strain Corby).